The following is an 847-amino-acid chain: Putative disease resistance RPP13-like protein 2 (847 aa).

Residues 26–42 are a coiled coil; the sequence is GVKDDLEELKTELTCIQ. One can recognise an NB-ARC domain in the interval 142–446; it reads STSRVREVRR…AEGFIQEDEE (305 aa). 191-198 contacts ATP; that stretch reads GMEGLGKT. 5 LRR repeats span residues 587–610, 612–634, 703–726, 749–774, and 807–830; these read LVHL…ISNL, FLQT…NLTS, LKNL…TVRF, FPSL…KLQR, and IKRL…NLDN.

It belongs to the disease resistance NB-LRR family. RPP13 subfamily.

Its function is as follows. Potential disease resistance protein. This Arabidopsis thaliana (Mouse-ear cress) protein is Putative disease resistance RPP13-like protein 2 (RPP13L2).